We begin with the raw amino-acid sequence, 390 residues long: Prostaglandin E2 receptor EP3 subtype (390 aa).

The Extracellular segment spans residues 1 to 53; it reads MKETRGYGGDAPFCTRLNHSYTGMWAPERSAEARGNLTRPPGSGEDCGSVSVA. N18 and N36 each carry an N-linked (GlcNAc...) asparagine glycan. A helical membrane pass occupies residues 54–78; that stretch reads FPITMLLTGFVGNALAMLLVSRSYR. The Cytoplasmic segment spans residues 79-91; sequence RRESKRKKSFLLC. A helical membrane pass occupies residues 92-112; the sequence is IGWLALTDLVGQLLTTPVVIV. At 113–131 the chain is on the extracellular side; it reads VYLSKQRWEHIDPSGRLCT. The chain crosses the membrane as a helical span at residues 132-153; the sequence is FFGLTMTVFGLSSLFIASAMAV. Residues 154–175 lie on the Cytoplasmic side of the membrane; that stretch reads ERALAIRAPHWYASHMKTRATR. The chain crosses the membrane as a helical span at residues 176 to 197; sequence AVLLGVWLAVLAFALLPVLGVG. Residues 198–227 lie on the Extracellular side of the membrane; it reads QYTVQWPGTWCFISTGRGGNGTSSSHNWGN. Residues 228-253 traverse the membrane as a helical segment; sequence LFFASAFAFLGLLALTVTFSCNLATI. The Cytoplasmic segment spans residues 254 to 283; the sequence is KALVSRCRAKATASQSSAQWGRITTETAIQ. A helical membrane pass occupies residues 284–307; it reads LMGIMCVLSVCWSPLLIMMLKMIF. At 308–327 the chain is on the extracellular side; sequence NQTSVEHCKTHTEKQKECNF. A helical transmembrane segment spans residues 328 to 349; that stretch reads FLIAVRLASLNQILDPWVYLLL. The Cytoplasmic segment spans residues 350 to 390; sequence RKILLRKFCQIRYHTNNYASSSTSLPCQCSSTLMWSDHLER.

The protein belongs to the G-protein coupled receptor 1 family. As to quaternary structure, interacts (via C-terminus) with MKLN1. Detected in kidney. Expressed in small intestine, heart, pancreas, gastric fundic mucosa, mammary artery and pulmonary vessels.

Its subcellular location is the cell membrane. Its function is as follows. Receptor for prostaglandin E2 (PGE2). The activity of this receptor can couple to both the inhibition of adenylate cyclase mediated by G(i) proteins, and to an elevation of intracellular calcium. Required for normal development of fever in response to pyrinogens, including IL1B, prostaglandin E2 and bacterial lipopolysaccharide (LPS). Required for normal potentiation of platelet aggregation by prostaglandin E2, and thus plays a role in the regulation of blood coagulation. Required for increased HCO3(-) secretion in the duodenum in response to mucosal acidification, and thereby contributes to the protection of the mucosa against acid-induced ulceration. Not required for normal kidney function, normal urine volume and osmolality. The polypeptide is Prostaglandin E2 receptor EP3 subtype (PTGER3) (Homo sapiens (Human)).